Consider the following 110-residue polypeptide: Thiosulfate sulfurtransferase GlpE (110 aa).

In terms of domain architecture, Rhodanese spans 17 to 105 (KKEGAVVVDI…WRATYPAETA (89 aa)). Cysteine 65 serves as the catalytic Cysteine persulfide intermediate.

It belongs to the GlpE family.

The protein resides in the cytoplasm. The enzyme catalyses thiosulfate + hydrogen cyanide = thiocyanate + sulfite + 2 H(+). It carries out the reaction thiosulfate + [thioredoxin]-dithiol = [thioredoxin]-disulfide + hydrogen sulfide + sulfite + 2 H(+). Transferase that catalyzes the transfer of sulfur from thiosulfate to thiophilic acceptors such as cyanide or dithiols. May function in a CysM-independent thiosulfate assimilation pathway by catalyzing the conversion of thiosulfate to sulfite, which can then be used for L-cysteine biosynthesis. The sequence is that of Thiosulfate sulfurtransferase GlpE from Pseudomonas putida (strain ATCC 700007 / DSM 6899 / JCM 31910 / BCRC 17059 / LMG 24140 / F1).